We begin with the raw amino-acid sequence, 133 residues long: p53 and DNA damage-regulated protein 1 (133 aa).

This sequence belongs to the prefoldin subunit beta family. In terms of assembly, component of the PAQosome complex which is responsible for the biogenesis of several protein complexes and which consists of R2TP complex members RUVBL1, RUVBL2, RPAP3 and PIH1D1, URI complex members PFDN2, PFDN6, PDRG1, UXT and URI1 as well as ASDURF, POLR2E and DNAAF10/WDR92.

The protein resides in the cytoplasm. Its function is as follows. May play a role in chaperone-mediated protein folding. This Mus musculus (Mouse) protein is p53 and DNA damage-regulated protein 1 (Pdrg1).